The chain runs to 238 residues: Ribonuclease PH (238 aa).

Phosphate contacts are provided by residues R86 and 124–126; that span reads GTR.

It belongs to the RNase PH family. Homohexameric ring arranged as a trimer of dimers.

It catalyses the reaction tRNA(n+1) + phosphate = tRNA(n) + a ribonucleoside 5'-diphosphate. Its function is as follows. Phosphorolytic 3'-5' exoribonuclease that plays an important role in tRNA 3'-end maturation. Removes nucleotide residues following the 3'-CCA terminus of tRNAs; can also add nucleotides to the ends of RNA molecules by using nucleoside diphosphates as substrates, but this may not be physiologically important. Probably plays a role in initiation of 16S rRNA degradation (leading to ribosome degradation) during starvation. This chain is Ribonuclease PH, found in Marinobacter nauticus (strain ATCC 700491 / DSM 11845 / VT8) (Marinobacter aquaeolei).